The primary structure comprises 311 residues: Cell division protein ZipA (311 aa).

At 1-6 the chain is on the periplasmic side; it reads MENLQL. The chain crosses the membrane as a helical span at residues 7–27; the sequence is VLFVLGAIAIIAVLVHGFWSI. Topologically, residues 28-311 are cytoplasmic; the sequence is RKQQPKSLKE…YLQRIRAQLD (284 aa). The tract at residues 46-114 is disordered; the sequence is DQASVRDSQG…FALSDEPVQR (69 aa). Composition is skewed to basic and acidic residues over residues 62–83 and 94–103; these read GEVRVRKEVPATDRQEKEDKPV and RDVEDSRHEQ.

Belongs to the ZipA family. In terms of assembly, interacts with FtsZ via their C-terminal domains.

The protein localises to the cell inner membrane. Functionally, essential cell division protein that stabilizes the FtsZ protofilaments by cross-linking them and that serves as a cytoplasmic membrane anchor for the Z ring. Also required for the recruitment to the septal ring of downstream cell division proteins. This chain is Cell division protein ZipA, found in Shewanella woodyi (strain ATCC 51908 / MS32).